Reading from the N-terminus, the 168-residue chain is Photosystem I assembly protein Ycf3 (168 aa).

3 TPR repeats span residues 35–68 (AFTYYRDGMSAQSEGNYAEALQNYYEATRLEIDP), 72–105 (SYILYNIGLIHTSNGEHTKALEYYFRALERNPFL), and 120–153 (GEQAIRQGDSEIAEAWSDQAAEYWKQAISLTPGN).

Belongs to the Ycf3 family.

It is found in the plastid. The protein resides in the chloroplast thylakoid membrane. In terms of biological role, essential for the assembly of the photosystem I (PSI) complex. May act as a chaperone-like factor to guide the assembly of the PSI subunits. The polypeptide is Photosystem I assembly protein Ycf3 (Piper cenocladum (Ant piper)).